The chain runs to 33 residues: Potassium channel toxin alpha-KTx 10.5 (33 aa).

Cystine bridges form between Cys4/Cys23, Cys9/Cys28, and Cys13/Cys30.

Expressed by the venom gland.

The protein resides in the secreted. Its function is as follows. Inhibits less than 5% of human voltage-gated potassium (Kv) channel Kv1.3/KCNA3 currents at 100nM concentration and does not block human Kv1.1/KCNA1 and Kv1.2/KCNA2 currents. The chain is Potassium channel toxin alpha-KTx 10.5 from Centruroides bonito (Scorpion).